The primary structure comprises 355 residues: Probable butyrate kinase (355 aa).

This sequence belongs to the acetokinase family.

It is found in the cytoplasm. It carries out the reaction butanoate + ATP = butanoyl phosphate + ADP. This is Probable butyrate kinase from Listeria innocua serovar 6a (strain ATCC BAA-680 / CLIP 11262).